We begin with the raw amino-acid sequence, 178 residues long: Large ribosomal subunit protein uL6 (178 aa).

It belongs to the universal ribosomal protein uL6 family. As to quaternary structure, part of the 50S ribosomal subunit. Interacts weakly with protein L13.

In terms of biological role, this protein binds to the 23S rRNA, and is important in its secondary structure. It is located near the subunit interface in the base of the L7/L12 stalk, and near the tRNA binding site of the peptidyltransferase center. This is Large ribosomal subunit protein uL6 from Haloarcula marismortui (strain ATCC 43049 / DSM 3752 / JCM 8966 / VKM B-1809) (Halobacterium marismortui).